The primary structure comprises 207 residues: Holliday junction branch migration complex subunit RuvA (207 aa).

The domain I stretch occupies residues 1 to 68 (MIGYLQGSLA…EDQWLLFGFL (68 aa)). Positions 69 to 147 (QMAERDLFRQ…EWREEAGLLP (79 aa)) are domain II. Positions 148–158 (SATAAPIAAVQ) are flexible linker. Residues 158-207 (QEDVEMTLLALGYNNREILQALTAIAQENLVQSGQPAEDWIREAIAWLSR) are domain III.

It belongs to the RuvA family. Homotetramer. Forms an RuvA(8)-RuvB(12)-Holliday junction (HJ) complex. HJ DNA is sandwiched between 2 RuvA tetramers; dsDNA enters through RuvA and exits via RuvB. An RuvB hexamer assembles on each DNA strand where it exits the tetramer. Each RuvB hexamer is contacted by two RuvA subunits (via domain III) on 2 adjacent RuvB subunits; this complex drives branch migration. In the full resolvosome a probable DNA-RuvA(4)-RuvB(12)-RuvC(2) complex forms which resolves the HJ.

The protein resides in the cytoplasm. Its function is as follows. The RuvA-RuvB-RuvC complex processes Holliday junction (HJ) DNA during genetic recombination and DNA repair, while the RuvA-RuvB complex plays an important role in the rescue of blocked DNA replication forks via replication fork reversal (RFR). RuvA specifically binds to HJ cruciform DNA, conferring on it an open structure. The RuvB hexamer acts as an ATP-dependent pump, pulling dsDNA into and through the RuvAB complex. HJ branch migration allows RuvC to scan DNA until it finds its consensus sequence, where it cleaves and resolves the cruciform DNA. This is Holliday junction branch migration complex subunit RuvA from Synechococcus elongatus (strain ATCC 33912 / PCC 7942 / FACHB-805) (Anacystis nidulans R2).